A 227-amino-acid polypeptide reads, in one-letter code: MLTVPGLCWLCRMPLALGHWGICSVCSRATRTDKTLCPQCGLPATHSHLPCGRCLQKPPPWQRLVTVADYAPPLSPLIHQLKFSRRSEIASALSRLLLLEVLHARRTTGLQLPDRIVSVPLWQRRHWRRGFNQSDLLCQPLSRWLHCQWDSEAVTRTRATATQHFLSARLRKRNLKNAFRLELPVQGRHMVIVDDVVTTGSTVAEIAQLLLRNGAAAVQVWCLCRTL.

This sequence belongs to the ComF/GntX family.

Required for the use of extracellular DNA as a nutrient. Has been suggested to be involved in gluconate metabolism. This is DNA utilization protein YhgH from Escherichia coli (strain K12).